A 200-amino-acid polypeptide reads, in one-letter code: Holliday junction branch migration complex subunit RuvA (200 aa).

Positions 1–64 (MFAYFRGKLT…EDLLQLYGFS (64 aa)) are domain I. Residues 65 to 143 (GEEERQLFRL…KLSPVSALAS (79 aa)) are domain II. The interval 144 to 154 (PARLSSTLLRD) is flexible linker. The segment at 154–200 (DDAVNALVTLGFSRIIVQKAVVAILEQNPGLTVEEVIKAALVSIHNS) is domain III.

It belongs to the RuvA family. As to quaternary structure, homotetramer. Forms an RuvA(8)-RuvB(12)-Holliday junction (HJ) complex. HJ DNA is sandwiched between 2 RuvA tetramers; dsDNA enters through RuvA and exits via RuvB. An RuvB hexamer assembles on each DNA strand where it exits the tetramer. Each RuvB hexamer is contacted by two RuvA subunits (via domain III) on 2 adjacent RuvB subunits; this complex drives branch migration. In the full resolvosome a probable DNA-RuvA(4)-RuvB(12)-RuvC(2) complex forms which resolves the HJ.

The protein resides in the cytoplasm. In terms of biological role, the RuvA-RuvB-RuvC complex processes Holliday junction (HJ) DNA during genetic recombination and DNA repair, while the RuvA-RuvB complex plays an important role in the rescue of blocked DNA replication forks via replication fork reversal (RFR). RuvA specifically binds to HJ cruciform DNA, conferring on it an open structure. The RuvB hexamer acts as an ATP-dependent pump, pulling dsDNA into and through the RuvAB complex. HJ branch migration allows RuvC to scan DNA until it finds its consensus sequence, where it cleaves and resolves the cruciform DNA. The chain is Holliday junction branch migration complex subunit RuvA from Pelodictyon phaeoclathratiforme (strain DSM 5477 / BU-1).